We begin with the raw amino-acid sequence, 136 residues long: Transmembrane protein 203 (136 aa).

An interaction with STING1 region spans residues 1–51; sequence MLFSLRELVQWLGFATFEIFVHLLALLVFSVLLALRVDGLTPGLSWWNVFV. 4 helical membrane passes run 14 to 34, 50 to 72, 81 to 101, and 112 to 132; these read FATF…VLLA, FVPF…VRLF, VLRL…EMLL, and LWFG…MIRA. The segment at 52-136 is required for lysosomal localization of the STING-TMEM203 complex; that stretch reads PFFAADGLST…LLMIRACRVN (85 aa).

As to quaternary structure, homodimer. Interacts with ATP2A2 and ITPR3. Interacts with STIM1 and STING1 (via transmembrane domain).

Its subcellular location is the endoplasmic reticulum membrane. The protein localises to the endoplasmic reticulum-Golgi intermediate compartment. It is found in the lysosome membrane. Functionally, involved in the regulation of cellular calcium homeotasis. Required for spermatogenesis. Acts as a regulator of STING-mediated inflammatory signaling in macrophages. Forms a complex with STING, promoting the activity of TBK1 kinase and the transcription factor IRF3, leading to activation of type I interferon expression. This Mus musculus (Mouse) protein is Transmembrane protein 203 (Tmem203).